The primary structure comprises 343 residues: Glucokinase (343 aa).

18–23 contacts ATP; the sequence is GDIGGT.

Belongs to the bacterial glucokinase family.

The protein resides in the cytoplasm. It catalyses the reaction D-glucose + ATP = D-glucose 6-phosphate + ADP + H(+). The sequence is that of Glucokinase from Brucella melitensis biotype 1 (strain ATCC 23456 / CCUG 17765 / NCTC 10094 / 16M).